Reading from the N-terminus, the 141-residue chain is Oleosin L (141 aa).

3 helical membrane passes run 23-43, 46-66, and 74-94; these read VLFF…LALA, VVLM…ILPV, and AAAF…LIWV. A Proline-knot motif is present at residues 54–65; the sequence is PVFLLLSPVILP.

Belongs to the oleosin family. As to expression, expressed in megagametophytes (at protein level).

The protein resides in the lipid droplet. The protein localises to the membrane. In Pinus massoniana (Chinese red pine), this protein is Oleosin L.